The sequence spans 423 residues: MSIKLQPVKGSKDLLPEEFGKHDYIISVSRNLSKLYGFQPISTPIIEYTEIFNRTLGKDSDVLSKEMYVFLDKGNRSVSLRPEFTASIMRAVIYNNLQNKKLPLKYFSSGPAFRYDNPQAGRQRQFHQINLECIGDGSPFSDAEIVLLAYDILKKLNLVDKVNLEINSLGCMESRAKYQQALVEYFSKYRTELSQDSQSRLIENPLRILDSKNLHDKKISASAPSIHDYYTIEARGYFDKVLEYLEFCGIKYTINANLVRGLDYYCHTVFEYVSTQIGAQSTVLGGGRYDGLFEQMGGKLASGKKMLPAIGFAAGIERLALLTNYTPVDVRPIVIIPVDEEYHQHGIILLQKLRNNNITTVIDLQDSISKRLNRANHIKASKVIFIGAIEMREQSYRIKDLDTSNECVIIHNELLSYLQNNCS.

It belongs to the class-II aminoacyl-tRNA synthetase family. As to quaternary structure, homodimer.

The protein localises to the cytoplasm. The enzyme catalyses tRNA(His) + L-histidine + ATP = L-histidyl-tRNA(His) + AMP + diphosphate + H(+). This chain is Histidine--tRNA ligase, found in Orientia tsutsugamushi (strain Boryong) (Rickettsia tsutsugamushi).